The chain runs to 255 residues: Pyridoxine 5'-phosphate synthase (255 aa).

The 3-amino-2-oxopropyl phosphate site is built by Asn-8 and Arg-19. His-44 acts as the Proton acceptor in catalysis. 2 residues coordinate 1-deoxy-D-xylulose 5-phosphate: Arg-46 and His-51. Glu-74 acts as the Proton acceptor in catalysis. Thr-111 lines the 1-deoxy-D-xylulose 5-phosphate pocket. His-202 acts as the Proton donor in catalysis. Residues Asp-203 and 225-226 (GH) contribute to the 3-amino-2-oxopropyl phosphate site.

This sequence belongs to the PNP synthase family. As to quaternary structure, homooctamer; tetramer of dimers.

The protein localises to the cytoplasm. The enzyme catalyses 3-amino-2-oxopropyl phosphate + 1-deoxy-D-xylulose 5-phosphate = pyridoxine 5'-phosphate + phosphate + 2 H2O + H(+). The protein operates within cofactor biosynthesis; pyridoxine 5'-phosphate biosynthesis; pyridoxine 5'-phosphate from D-erythrose 4-phosphate: step 5/5. Functionally, catalyzes the complicated ring closure reaction between the two acyclic compounds 1-deoxy-D-xylulose-5-phosphate (DXP) and 3-amino-2-oxopropyl phosphate (1-amino-acetone-3-phosphate or AAP) to form pyridoxine 5'-phosphate (PNP) and inorganic phosphate. This is Pyridoxine 5'-phosphate synthase from Xanthomonas oryzae pv. oryzae (strain PXO99A).